The chain runs to 417 residues: UPF0761 membrane protein Veis_3782 (417 aa).

Transmembrane regions (helical) follow at residues 54-74 (ILAL…FPIF), 111-131 (GLGL…ILTI), 151-171 (VLIY…SLAL), 192-212 (FLFD…LYHY), 226-246 (GGLF…LYLG), and 261-281 (LPIL…GAVV).

Belongs to the UPF0761 family.

Its subcellular location is the cell inner membrane. This chain is UPF0761 membrane protein Veis_3782, found in Verminephrobacter eiseniae (strain EF01-2).